The following is a 283-amino-acid chain: Bifunctional protein FolD (283 aa).

Residues 165–167 (GRS), serine 190, and isoleucine 231 contribute to the NADP(+) site.

It belongs to the tetrahydrofolate dehydrogenase/cyclohydrolase family. As to quaternary structure, homodimer.

It catalyses the reaction (6R)-5,10-methylene-5,6,7,8-tetrahydrofolate + NADP(+) = (6R)-5,10-methenyltetrahydrofolate + NADPH. The enzyme catalyses (6R)-5,10-methenyltetrahydrofolate + H2O = (6R)-10-formyltetrahydrofolate + H(+). It functions in the pathway one-carbon metabolism; tetrahydrofolate interconversion. Functionally, catalyzes the oxidation of 5,10-methylenetetrahydrofolate to 5,10-methenyltetrahydrofolate and then the hydrolysis of 5,10-methenyltetrahydrofolate to 10-formyltetrahydrofolate. The chain is Bifunctional protein FolD from Janthinobacterium sp. (strain Marseille) (Minibacterium massiliensis).